The following is a 486-amino-acid chain: Cysteine--tRNA ligase (486 aa).

Zn(2+) is bound at residue Cys-29. Residues 31-41 (VTVYDYCHLGH) carry the 'HIGH' region motif. Zn(2+) is bound by residues Cys-214, His-239, and Glu-243. Positions 271–275 (KMSKS) match the 'KMSKS' region motif. Lys-274 is an ATP binding site.

This sequence belongs to the class-I aminoacyl-tRNA synthetase family. In terms of assembly, monomer. The cofactor is Zn(2+).

It localises to the cytoplasm. It carries out the reaction tRNA(Cys) + L-cysteine + ATP = L-cysteinyl-tRNA(Cys) + AMP + diphosphate. The sequence is that of Cysteine--tRNA ligase from Trichormus variabilis (strain ATCC 29413 / PCC 7937) (Anabaena variabilis).